The following is a 254-amino-acid chain: 3-deoxy-manno-octulosonate cytidylyltransferase (254 aa).

The protein belongs to the KdsB family.

Its subcellular location is the cytoplasm. The enzyme catalyses 3-deoxy-alpha-D-manno-oct-2-ulosonate + CTP = CMP-3-deoxy-beta-D-manno-octulosonate + diphosphate. It participates in nucleotide-sugar biosynthesis; CMP-3-deoxy-D-manno-octulosonate biosynthesis; CMP-3-deoxy-D-manno-octulosonate from 3-deoxy-D-manno-octulosonate and CTP: step 1/1. The protein operates within bacterial outer membrane biogenesis; lipopolysaccharide biosynthesis. In terms of biological role, activates KDO (a required 8-carbon sugar) for incorporation into bacterial lipopolysaccharide in Gram-negative bacteria. This Nitrobacter winogradskyi (strain ATCC 25391 / DSM 10237 / CIP 104748 / NCIMB 11846 / Nb-255) protein is 3-deoxy-manno-octulosonate cytidylyltransferase.